The primary structure comprises 302 residues: MKNLLSMSDAKNEVNAILEIASGLKSGEITEKPLTNKYIGMIFEKSSTRTRVSFEVGIHQLGGTPLYLSSKDLQLNRGEPIEDTARVLSRFLDGIMIRAKKHENVEELVQYSTIPIISGLTDKEHPCQIFADLLTIKEYKGDFNDKKIVFIGDGNNVCNSLLLAAAYVGMDMTVACPEGYEPNEKIYTLAKQEAQKTNSTIKIENNVNEAVKDADVLYTDVWVSMGDEDEQDERERIFKPYQINNELLSQAKDDAIVMHCLPAIRGQEITADVMVSPQSAIWDQAENRLHAQKAILYHIFKE.

Carbamoyl phosphate-binding positions include 47–50 (STRT), Gln74, Arg98, and 125–128 (HPCQ). Residues Asn156, Asp220, and 224–225 (SM) each bind L-ornithine. Residues 260 to 261 (CL) and Arg288 contribute to the carbamoyl phosphate site.

The protein belongs to the aspartate/ornithine carbamoyltransferase superfamily. OTCase family.

It is found in the cytoplasm. It carries out the reaction carbamoyl phosphate + L-ornithine = L-citrulline + phosphate + H(+). It functions in the pathway amino-acid biosynthesis; L-arginine biosynthesis; L-arginine from L-ornithine and carbamoyl phosphate: step 1/3. Functionally, reversibly catalyzes the transfer of the carbamoyl group from carbamoyl phosphate (CP) to the N(epsilon) atom of ornithine (ORN) to produce L-citrulline. The polypeptide is Ornithine carbamoyltransferase (Methanosphaera stadtmanae (strain ATCC 43021 / DSM 3091 / JCM 11832 / MCB-3)).